The chain runs to 747 residues: ATPase family gene 2 protein homolog B (747 aa).

Position 1 is an N-acetylmethionine (Met1). Residues 234–241 (GPPGVGKT) and 500–507 (GPPGCAKT) each bind ATP.

The protein belongs to the AAA ATPase family. AFG2 subfamily. In terms of assembly, part of the 55LCC heterohexameric ATPase complex composed at least of AIRIM, AFG2A, AFG2B and CINP. Associates with pre-60S ribosomal particles. In terms of tissue distribution, in adult ear, expressed at low levels in neurosensory hair cells (inner and outer) and supporting cells (pillar and Deiter cells).

The protein resides in the cytoplasm. The protein localises to the cytoskeleton. It localises to the spindle. It is found in the nucleus. The enzyme catalyses ATP + H2O = ADP + phosphate + H(+). In the context of 55LCC heterohexameric ATPase complex, the ATPase activity is stimulated by DNA binding and inhibited in presence of RNA. ATP-dependent chaperone part of the 55LCC heterohexameric ATPase complex which is chromatin-associated and promotes replisome proteostasis to maintain replication fork progression and genome stability. Required for replication fork progression, sister chromatid cohesion, and chromosome stability. The ATPase activity is specifically enhanced by replication fork DNA and is coupled to cysteine protease-dependent cleavage of replisome substrates in response to replication fork damage. Uses ATPase activity to process replisome substrates in S-phase, facilitating their proteolytic turnover from chromatin to ensure DNA replication and mitotic fidelity. Plays an essential role in the cytoplasmic maturation steps of pre-60S ribosomal particles by promoting the release of shuttling protein RSL24D1/RLP24 from the pre-ribosomal particles. The chain is ATPase family gene 2 protein homolog B (Afg2b) from Mus musculus (Mouse).